Here is a 578-residue protein sequence, read N- to C-terminus: Lysine--tRNA ligase (578 aa).

2 residues coordinate Mg(2+): E414 and E421.

The protein belongs to the class-II aminoacyl-tRNA synthetase family. As to quaternary structure, homodimer. The cofactor is Mg(2+).

It localises to the cytoplasm. The enzyme catalyses tRNA(Lys) + L-lysine + ATP = L-lysyl-tRNA(Lys) + AMP + diphosphate. This is Lysine--tRNA ligase from Porphyromonas gingivalis (strain ATCC BAA-308 / W83).